The following is a 312-amino-acid chain: Ribonuclease HIII (312 aa).

The RNase H type-2 domain maps to 95–311 (FNCIGSDEAG…REKAQKILKP (217 aa)). The a divalent metal cation site is built by Asp-101, Glu-102, and Asp-206.

The protein belongs to the RNase HII family. RnhC subfamily. Mn(2+) serves as cofactor. Requires Mg(2+) as cofactor.

The protein resides in the cytoplasm. The catalysed reaction is Endonucleolytic cleavage to 5'-phosphomonoester.. Endonuclease that specifically degrades the RNA of RNA-DNA hybrids. The polypeptide is Ribonuclease HIII (Staphylococcus aureus (strain MSSA476)).